The following is a 1328-amino-acid chain: Mitogen-activated protein kinase kinase kinase 19 (1328 aa).

Residues 1 to 19 (MSSMPKPERHAESLLDICH) are compositionally biased toward basic and acidic residues. Disordered stretches follow at residues 1 to 28 (MSSMPKPERHAESLLDICHDTNSSPTDL), 44 to 74 (RSEEFDQDGDCSHSTLVNEEEDPSGGRQDWQ), 344 to 380 (VREEDIDCHGSKTRKPEEENSQYLSSRKNESSVAKNY), and 524 to 561 (QENDKHKMNSHRSKLDSKTKTSKKTPQNFVISTEGPIK). Basic and acidic residues predominate over residues 344-361 (VREEDIDCHGSKTRKPEE). The span at 364–377 (SQYLSSRKNESSVA) shows a compositional bias: polar residues. Basic and acidic residues predominate over residues 524-542 (QENDKHKMNSHRSKLDSKT). Residues 1061 to 1324 (WTKGEILGKG…ALQLLKHSFL (264 aa)) enclose the Protein kinase domain. ATP contacts are provided by residues 1067 to 1075 (LGKGAYGTV) and Lys-1089. The active-site Proton acceptor is the Asp-1186.

This sequence belongs to the protein kinase superfamily. STE Ser/Thr protein kinase family. STE20 subfamily.

It catalyses the reaction L-seryl-[protein] + ATP = O-phospho-L-seryl-[protein] + ADP + H(+). It carries out the reaction L-threonyl-[protein] + ATP = O-phospho-L-threonyl-[protein] + ADP + H(+). The sequence is that of Mitogen-activated protein kinase kinase kinase 19 (MAP3K19) from Homo sapiens (Human).